The following is a 52-amino-acid chain: UPF0181 protein HI_1434.2 (52 aa).

It belongs to the UPF0181 family.

The protein is UPF0181 protein HI_1434.2 of Haemophilus influenzae (strain ATCC 51907 / DSM 11121 / KW20 / Rd).